The following is a 293-amino-acid chain: Acidic endochitinase (293 aa).

A signal peptide spans 1–22; it reads MEKCFNIIPSLLLISLLIKSSN. The GH18 domain occupies 24–293; the sequence is AGIAVYWGQN…GYSNAIKGSV (270 aa). 2 disulfide bridges follow: Cys-43–Cys-90 and Cys-73–Cys-80. Glu-150 functions as the Proton donor in the catalytic mechanism. A disulfide bond links Cys-179 and Cys-208.

This sequence belongs to the glycosyl hydrolase 18 family. Chitinase class II subfamily.

Its subcellular location is the secreted. It is found in the extracellular space. The catalysed reaction is Random endo-hydrolysis of N-acetyl-beta-D-glucosaminide (1-&gt;4)-beta-linkages in chitin and chitodextrins.. Its function is as follows. This protein functions as a defense against chitin containing fungal pathogens. The sequence is that of Acidic endochitinase from Cicer arietinum (Chickpea).